The chain runs to 427 residues: Adenylosuccinate synthetase (427 aa).

GTP contacts are provided by residues 12–18 and 40–42; these read GDEGKGK and GHT. Asp13 (proton acceptor) is an active-site residue. Residues Asp13 and Gly40 each coordinate Mg(2+). IMP contacts are provided by residues 13–16, 38–41, Thr126, Arg140, Gln221, Thr236, and Arg299; these read DEGK and NAGH. The Proton donor role is filled by His41. 295-301 provides a ligand contact to substrate; that stretch reads STTNRPR. GTP-binding positions include Arg301, 327-329, and 409-411; these read KLD and SLG.

This sequence belongs to the adenylosuccinate synthetase family. In terms of assembly, homodimer. Mg(2+) serves as cofactor.

It localises to the cytoplasm. The enzyme catalyses IMP + L-aspartate + GTP = N(6)-(1,2-dicarboxyethyl)-AMP + GDP + phosphate + 2 H(+). The protein operates within purine metabolism; AMP biosynthesis via de novo pathway; AMP from IMP: step 1/2. Its function is as follows. Plays an important role in the de novo pathway of purine nucleotide biosynthesis. Catalyzes the first committed step in the biosynthesis of AMP from IMP. This is Adenylosuccinate synthetase from Borrelia turicatae (strain 91E135).